The chain runs to 64 residues: Bacteriocin plantaricin ASM1 (64 aa).

The N-terminal stretch at 1–21 (MSKLVKTLTVDEISKIQTNGG) is a signal peptide. The lanthionine (Ser-Cys) cross-link spans 61–64 (SYHC).

In terms of processing, contains 2 disulfide bonds.

It is found in the secreted. Its function is as follows. Bacteriocin with a narrow antibacterial spectrum. Antibacterial activity against the Gram-positive bacteria L.plantarun, L.pentosus, L.curvatus, L.lindneri, L.mesenteroides and E.faecilis. Lacks antibacterial activity against the Gram-positive bacteria L.brevis, L.sakei, L.lactis, P.acidilactici, B.subtilis, B.cereus, L.monocytogenes and S.aureus, and against the Gram-negative bacteria E.coli and S.typhimurium. This is Bacteriocin plantaricin ASM1 from Lactiplantibacillus plantarum (Lactobacillus plantarum).